Reading from the N-terminus, the 194-residue chain is Peptide deformylase (194 aa).

The Fe cation site is built by Cys105 and His147. The active site involves Glu148. His151 is a binding site for Fe cation.

Belongs to the polypeptide deformylase family. It depends on Fe(2+) as a cofactor.

The catalysed reaction is N-terminal N-formyl-L-methionyl-[peptide] + H2O = N-terminal L-methionyl-[peptide] + formate. Functionally, removes the formyl group from the N-terminal Met of newly synthesized proteins. Requires at least a dipeptide for an efficient rate of reaction. N-terminal L-methionine is a prerequisite for activity but the enzyme has broad specificity at other positions. This chain is Peptide deformylase, found in Flavobacterium psychrophilum (strain ATCC 49511 / DSM 21280 / CIP 103535 / JIP02/86).